The following is a 460-amino-acid chain: A-type ATP synthase subunit B (460 aa).

This sequence belongs to the ATPase alpha/beta chains family. As to quaternary structure, has multiple subunits with at least A(3), B(3), C, D, E, F, H, I and proteolipid K(x).

It is found in the cell membrane. In terms of biological role, component of the A-type ATP synthase that produces ATP from ADP in the presence of a proton gradient across the membrane. The B chain is a regulatory subunit. The sequence is that of A-type ATP synthase subunit B from Thermoplasma acidophilum (strain ATCC 25905 / DSM 1728 / JCM 9062 / NBRC 15155 / AMRC-C165).